Reading from the N-terminus, the 953-residue chain is Isoleucine--tRNA ligase (953 aa).

Positions Pro58–His68 match the 'HIGH' region motif. L-isoleucyl-5'-AMP is bound at residue Glu565. The short motif at Lys606–Ser610 is the 'KMSKS' region element. Lys609 contributes to the ATP binding site. Cys916, Cys919, Cys936, and Cys939 together coordinate Zn(2+).

This sequence belongs to the class-I aminoacyl-tRNA synthetase family. IleS type 1 subfamily. As to quaternary structure, monomer. Zn(2+) is required as a cofactor.

It localises to the cytoplasm. The catalysed reaction is tRNA(Ile) + L-isoleucine + ATP = L-isoleucyl-tRNA(Ile) + AMP + diphosphate. Its function is as follows. Catalyzes the attachment of isoleucine to tRNA(Ile). As IleRS can inadvertently accommodate and process structurally similar amino acids such as valine, to avoid such errors it has two additional distinct tRNA(Ile)-dependent editing activities. One activity is designated as 'pretransfer' editing and involves the hydrolysis of activated Val-AMP. The other activity is designated 'posttransfer' editing and involves deacylation of mischarged Val-tRNA(Ile). This is Isoleucine--tRNA ligase from Colwellia psychrerythraea (strain 34H / ATCC BAA-681) (Vibrio psychroerythus).